Here is a 398-residue protein sequence, read N- to C-terminus: Spermatogenesis associated 6-like protein (398 aa).

The interval 170–215 (KLNGPANNRKKKPKEKNSDQLSKGTPFWGPSPQRLHLHRPTQRNPG) is disordered. Phosphoserine is present on residues serine 269 and serine 272.

This sequence belongs to the SPATA6 family.

The polypeptide is Spermatogenesis associated 6-like protein (Spata6l) (Rattus norvegicus (Rat)).